A 367-amino-acid chain; its full sequence is Cystinosin (367 aa).

The N-terminal stretch at 1–22 (MIRRWLVIFILFPLQLIEKCES) is a signal peptide. The Lumenal portion of the chain corresponds to 23–125 (TVDFSVPPIV…LVIHSNIVSI (103 aa)). N-linked (GlcNAc...) asparagine glycosylation is found at asparagine 51, asparagine 66, asparagine 84, asparagine 104, and asparagine 107. Positions 123-189 (VSIINQVIGW…LFWVPSIKEQ (67 aa)) constitute a PQ-loop 1 domain. A helical transmembrane segment spans residues 126-150 (INQVIGWIYFVAWSVSFYPQVITNW). Topologically, residues 151–159 (RRKSVVGLS) are cytoplasmic. Residues 160–179 (FDFVVLNLMGFVAYSVFNIG) traverse the membrane as a helical segment. Residue asparagine 166 participates in L-cystine binding. Residues 180–202 (LFWVPSIKEQFLLKYPNGVNPVD) lie on the Lumenal side of the membrane. A helical membrane pass occupies residues 203-225 (SNDVFFSLHAVALTLVVIVQCLL). Residue aspartate 205 participates in H(+) binding. Residues 226–234 (YERGSQRVS) lie on the Cytoplasmic side of the membrane. Residues 235-257 (WLAISFLVLSWLFTLIALIMAAV) form a helical membrane-spanning segment. Residues 258–263 (GATTWL) lie on the Lumenal side of the membrane. The 66-residue stretch at 263 to 328 (LQFLFCFSYI…QSYNNDQWTL (66 aa)) folds into the PQ-loop 2 domain. Residues 264-289 (QFLFCFSYIKLAVTLVKYFPQAYMNF) form a helical membrane-spanning segment. Lysine 273, lysine 280, and tyrosine 281 together coordinate L-cystine. Residues 290–298 (HYKSTEGWS) lie on the Cytoplasmic side of the membrane. The chain crosses the membrane as a helical span at residues 299-308 (IGNVLLDFTG). Asparagine 301 and aspartate 305 together coordinate L-cystine. Aspartate 305 serves as a coordination point for H(+). At 309-331 (GSFSLLQMFLQSYNNDQWTLIFG) the chain is on the lumenal side. A helical membrane pass occupies residues 332–354 (DPTKFGLGIFSIIFDVVFFIQHF). Aspartate 346 lines the H(+) pocket. At 355–367 (CLYRKKPGYDQLN) the chain is on the cytoplasmic side. A Lysosomal targeting motif motif is present at residues 362–366 (GYDQL).

This sequence belongs to the cystinosin family. As to quaternary structure, interacts with components of the V-ATPase complex. Interacts with components of the Ragulator complex. Interacts with RRAGA/RagA and RRAGC/RagC. Interacts with AP-3 complex subunit mu (AP3M1 or AP3M2).

The protein resides in the lysosome membrane. It is found in the melanosome membrane. The catalysed reaction is L-cystine(out) + H(+)(out) = L-cystine(in) + H(+)(in). With respect to regulation, switches between a lumen- and a cytosol-open conformation: pH induces conformational changes and shifts the equilibrium to facilitate the transition between the lumen- and cytosol-open conformation, thereby promoting cystine transport. Protonation of specific aspartate residues (Asp-205, Asp-305 and Asp-346) favors the cytosol-open conformation. Cystine/H(+) symporter that mediates export of cystine, the oxidized dimer of cysteine, from lysosomes. Plays an important role in melanin synthesis by catalyzing cystine export from melanosomes, possibly by inhibiting pheomelanin synthesis. In addition to cystine export, also acts as a positive regulator of mTORC1 signaling in kidney proximal tubular cells, via interactions with components of the v-ATPase and Ragulator complexes. Also involved in small GTPase-regulated vesicle trafficking and lysosomal localization of LAMP2A, independently of cystine transporter activity. The sequence is that of Cystinosin from Bos taurus (Bovine).